Reading from the N-terminus, the 105-residue chain is Serine protease inhibitor Kazal-type 6 (105 aa).

The first 23 residues, 1–23 (MKVAGVFLLLSLALLCFFSGEFS), serve as a signal peptide directing secretion. Q24 carries the post-translational modification Pyrrolidone carboxylic acid. One can recognise a Kazal-like domain in the interval 49–105 (RLFQINCGEFRDPKVFCTRESDPLCGSDGQTYGNKCAFCKALEKSSGKINLKHRGKC). Cystine bridges form between C55–C87, C65–C84, and C73–C105.

It is found in the secreted. Serine protease inhibitor selective for kallikreins. Efficiently inhibits KLK4, KLK5, KLK6, KLK7, KLK12, KLK13 and KLK14. Doesn't inhibit KLK8. The polypeptide is Serine protease inhibitor Kazal-type 6 (Spink6) (Rattus norvegicus (Rat)).